A 428-amino-acid chain; its full sequence is Isocitrate lyase 1 (428 aa).

Position 91–93 (91–93 (SGW)) interacts with substrate. Aspartate 153 contacts Mg(2+). Cysteine 191 (proton acceptor) is an active-site residue. Substrate is bound by residues 192-193 (GH), arginine 228, 313-317 (NCSPS), and threonine 347.

This sequence belongs to the isocitrate lyase/PEP mutase superfamily. Isocitrate lyase family. As to quaternary structure, homotetramer. Requires Mg(2+) as cofactor.

The catalysed reaction is D-threo-isocitrate = glyoxylate + succinate. It catalyses the reaction (2S,3R)-3-hydroxybutane-1,2,3-tricarboxylate = pyruvate + succinate. Its pathway is carbohydrate metabolism; glyoxylate cycle; (S)-malate from isocitrate: step 1/2. Its function is as follows. Involved in the persistence and virulence of M.tuberculosis. Catalyzes the reversible formation of succinate and glyoxylate from isocitrate, a key step of the glyoxylate cycle, which operates as an anaplerotic route for replenishing the tricarboxylic acid cycle during growth on fatty acid substrates. It also catalyzes the formation of pyruvate and succinate from 2-methylisocitrate, a key step in the methylcitrate cycle (propionate degradation route). The chain is Isocitrate lyase 1 (icl1) from Mycobacterium tuberculosis (strain ATCC 35801 / TMC 107 / Erdman).